Reading from the N-terminus, the 145-residue chain is Small ribosomal subunit protein uS12 (145 aa).

The protein belongs to the universal ribosomal protein uS12 family. As to quaternary structure, part of the 30S ribosomal subunit.

With S4 and S5 plays an important role in translational accuracy. Located at the interface of the 30S and 50S subunits. This chain is Small ribosomal subunit protein uS12, found in Cenarchaeum symbiosum (strain A).